Consider the following 90-residue polypeptide: Probable Fe(2+)-trafficking protein (90 aa).

This sequence belongs to the Fe(2+)-trafficking protein family.

Could be a mediator in iron transactions between iron acquisition and iron-requiring processes, such as synthesis and/or repair of Fe-S clusters in biosynthetic enzymes. This Herminiimonas arsenicoxydans protein is Probable Fe(2+)-trafficking protein.